Here is a 67-residue protein sequence, read N- to C-terminus: Conotoxin AbVIM (67 aa).

An N-terminal signal peptide occupies residues 1–17; it reads VLIIAVLFLTACQLIAT. A propeptide spanning residues 18–40 is cleaved from the precursor; the sequence is ASYARSERKHPDLRLSSRNSKLS. 3 disulfide bridges follow: cysteine 43-cysteine 57, cysteine 50-cysteine 61, and cysteine 56-cysteine 66.

The protein belongs to the conotoxin O1 superfamily. As to expression, expressed by the venom duct.

It is found in the secreted. In Conus abbreviatus (Abbreviated cone), this protein is Conotoxin AbVIM.